The primary structure comprises 173 residues: Ribosomal RNA large subunit methyltransferase H (173 aa).

Leu-89 and Gly-121 together coordinate S-adenosyl-L-methionine.

The protein belongs to the RNA methyltransferase RlmH family. In terms of assembly, homodimer.

It localises to the cytoplasm. The catalysed reaction is pseudouridine(1915) in 23S rRNA + S-adenosyl-L-methionine = N(3)-methylpseudouridine(1915) in 23S rRNA + S-adenosyl-L-homocysteine + H(+). Functionally, specifically methylates the pseudouridine at position 1915 (m3Psi1915) in 23S rRNA. The chain is Ribosomal RNA large subunit methyltransferase H from Chelativorans sp. (strain BNC1).